The sequence spans 490 residues: MDLVVVLGLCLSCLLLPSLWKQSHGGGKLPPGPTPFPILGNVLQLDFKDLSKSLTNLSKVYGPVFTVYLGMKPTVVVHGYEAVKEALVDLGHELSGRSRFLVTAKLNKGFGVIFSNGKRWTETRRFSLMTLRNFGMGKRSIEERVQEEAHCLVEELRKTNASPCDPTFILGAAPCNVICSVIFQNRFDYTDQDFLSLMGKFNENFKILNSPWVQFCNCFPILFDYFPGSHRKAVKNIFYVKNYITEQIKEHQKSLDINNPRDFIDCFLIKMEQEKCNQQSEFTIENLLTTVSDVFMAGTETTSTTLRYGLLLLMKHPEVIAKVQEEIERVIGRHRSPCMQDRSRMPYTDATVHEIQRYINLIPNNVPHTTICNLKFRNYLIPKGTDVLTSLSSVLHDDKEFPNPDRFDPGHFLDASGNFRKSDYFMPFSTGKRVCVGEALARMELFLFLTAILQNFTPKPLVNPNNVDENPFSSGIVRVPPLYRVSFIPV.

Cys-435 is a binding site for heme.

The protein belongs to the cytochrome P450 family. The cofactor is heme.

The protein localises to the endoplasmic reticulum membrane. It is found in the microsome membrane. The catalysed reaction is an organic molecule + reduced [NADPH--hemoprotein reductase] + O2 = an alcohol + oxidized [NADPH--hemoprotein reductase] + H2O + H(+). Cytochromes P450 are a group of heme-thiolate monooxygenases. In liver microsomes, this enzyme is involved in an NADPH-dependent electron transport pathway. It oxidizes a variety of structurally unrelated compounds, including steroids, fatty acids, and xenobiotics. In the epoxidation of arachidonic acid it generates only 14,15- and 11,12-cis-epoxyeicosatrienoic acids. This chain is Cytochrome P450 2C2 (CYP2C2), found in Oryctolagus cuniculus (Rabbit).